Here is a 1300-residue protein sequence, read N- to C-terminus: Insulin receptor-related protein (1300 aa).

Residues 1-26 form the signal peptide; sequence MARPKLWPWGILLLVSLLSAGFNLDT. An N-linked (GlcNAc...) asparagine glycan is attached at N47. 9 disulfide bridges follow: C214-C222, C216-C228, C229-C237, C233-C246, C249-C258, C262-C274, C280-C300, C304-C317, and C320-C324. N311 carries an N-linked (GlcNAc...) asparagine glycan. 8 N-linked (GlcNAc...) asparagine glycosylation sites follow: N411, N492, N528, N616, N634, N756, N885, and N898. Fibronectin type-III domains follow at residues 483–603 and 607–707; these read QTRT…TLPA and VPQD…AQEA. An intrachain disulfide couples C657 to C864. The disordered stretch occupies residues 740–762; it reads DAGRHRRAIGSPRPGGNSSDFEI. At 747–921 the chain is on the extracellular side; sequence AIGSPRPGGN…PEEEDSGGLH (175 aa). Positions 818–912 constitute a Fibronectin type-III 3 domain; the sequence is IPGKLSWEAA…DSVAFYIPGP (95 aa). The helical transmembrane segment at 922-943 threads the bilayer; it reads ILLTVTPAGLMLLIILAALGFF. Residues 944 to 1300 are Cytoplasmic-facing; the sequence is YSRKRNGTLY…CSLQNGGPEH (357 aa). In terms of domain architecture, Protein kinase spans 979 to 1254; it reads ISIIRELGQG…SIQKELRPSF (276 aa). Residues 985-993 and K1013 each bind ATP; that span reads LGQGSFGMV. D1115 acts as the Proton acceptor in catalysis. Y1145 and Y1146 each carry phosphotyrosine; by autocatalysis. The disordered stretch occupies residues 1270–1300; that stretch reads GLQPTTDAESSSPPTSKGASDCSLQNGGPEH. Residues 1272–1300 are compositionally biased toward polar residues; the sequence is QPTTDAESSSPPTSKGASDCSLQNGGPEH.

It belongs to the protein kinase superfamily. Tyr protein kinase family. Insulin receptor subfamily. Probable tetramer of 2 alpha and 2 beta chains linked by disulfide bonds. The alpha chains contribute to the formation of the ligand-binding domain, while the beta chains carry the kinase domain. Post-translationally, autophosphorylated on tyrosine residues between pH 7.9 and pH 10.5.

Its subcellular location is the membrane. The catalysed reaction is L-tyrosyl-[protein] + ATP = O-phospho-L-tyrosyl-[protein] + ADP + H(+). Its function is as follows. Receptor with tyrosine-protein kinase activity. Functions as a pH sensing receptor which is activated by increased extracellular pH. Activates an intracellular signaling pathway that involves IRS1 and AKT1/PKB. The polypeptide is Insulin receptor-related protein (INSRR) (Cavia porcellus (Guinea pig)).